A 108-amino-acid polypeptide reads, in one-letter code: Large ribosomal subunit protein P1 (108 aa).

Positions P67 to G108 are disordered. Over residues K84–A99 the composition is skewed to acidic residues.

It belongs to the eukaryotic ribosomal protein P1/P2 family. Part of the 50S ribosomal subunit. Homodimer, it forms part of the ribosomal stalk which helps the ribosome interact with GTP-bound translation factors. Forms a heptameric uL10/P0(P1)2(P1)2(P1)2 complex, where uL10/P0 forms an elongated spine to which the P1 dimers bind in a sequential fashion.

Forms part of the ribosomal stalk, playing a central role in the interaction of the ribosome with GTP-bound translation factors. The stalk complex of P.horikoshii binds to E.coli large subunits and confers on them the ability to interact with eukaryotic elongation factors. Each succesive P1 dimer bound along the P0 spine increases the GTPase activity of elongation factors and increases translation by reconsituted ribosomes. This is Large ribosomal subunit protein P1 from Pyrococcus horikoshii (strain ATCC 700860 / DSM 12428 / JCM 9974 / NBRC 100139 / OT-3).